The primary structure comprises 123 residues: MPTIQQLIRSQRKKVEKKTKSPALRGCPQRRGVCTRVYTTTPKKPNSALRKVARVRLTSGFEVTAYIPGIGHNLQEHSVVLVRGGRVKDLPGVRYHIVRGILDTAGVKDRSQGRSKYGVKRPK.

The protein belongs to the universal ribosomal protein uS12 family. As to quaternary structure, part of the 30S ribosomal subunit.

The protein localises to the plastid. It localises to the chloroplast. Its function is as follows. With S4 and S5 plays an important role in translational accuracy. Located at the interface of the 30S and 50S subunits. In Chlorokybus atmophyticus (Soil alga), this protein is Small ribosomal subunit protein uS12c (rps12).